A 58-amino-acid chain; its full sequence is Probable U-exon protein (58 aa).

In Snake adenovirus serotype 1 (SnAdV-1), this protein is Probable U-exon protein.